Here is a 912-residue protein sequence, read N- to C-terminus: Phosphoenolpyruvate carboxylase (912 aa).

Residues H138 and K575 contribute to the active site.

Belongs to the PEPCase type 1 family. Requires Mg(2+) as cofactor.

It carries out the reaction oxaloacetate + phosphate = phosphoenolpyruvate + hydrogencarbonate. Its function is as follows. Forms oxaloacetate, a four-carbon dicarboxylic acid source for the tricarboxylic acid cycle. This Lactobacillus acidophilus (strain ATCC 700396 / NCK56 / N2 / NCFM) protein is Phosphoenolpyruvate carboxylase.